The chain runs to 476 residues: ATP synthase subunit beta (476 aa).

158–165 (GGAGVGKT) contacts ATP.

Belongs to the ATPase alpha/beta chains family. F-type ATPases have 2 components, CF(1) - the catalytic core - and CF(0) - the membrane proton channel. CF(1) has five subunits: alpha(3), beta(3), gamma(1), delta(1), epsilon(1). CF(0) has three main subunits: a(1), b(2) and c(9-12). The alpha and beta chains form an alternating ring which encloses part of the gamma chain. CF(1) is attached to CF(0) by a central stalk formed by the gamma and epsilon chains, while a peripheral stalk is formed by the delta and b chains.

The protein resides in the cell inner membrane. The catalysed reaction is ATP + H2O + 4 H(+)(in) = ADP + phosphate + 5 H(+)(out). Its function is as follows. Produces ATP from ADP in the presence of a proton gradient across the membrane. The catalytic sites are hosted primarily by the beta subunits. The chain is ATP synthase subunit beta from Paracidovorax citrulli (strain AAC00-1) (Acidovorax citrulli).